A 298-amino-acid polypeptide reads, in one-letter code: Putative F-box and FNIP repeat-containing protein R286 (298 aa).

The 45-residue stretch at 4–48 (LNVLESHVILHIIEFLPDHEKIKFMSTCKSLYEFRCHVTYNNFYV) folds into the F-box domain. FNIP repeat units lie at residues 124–165 (FNKP…LGHN) and 255–297 (WNFD…FISR).

The chain is Putative F-box and FNIP repeat-containing protein R286 from Acanthamoeba polyphaga (Amoeba).